A 370-amino-acid polypeptide reads, in one-letter code: Histidinol-phosphate aminotransferase 1 (370 aa).

Lysine 222 carries the N6-(pyridoxal phosphate)lysine modification.

This sequence belongs to the class-II pyridoxal-phosphate-dependent aminotransferase family. Histidinol-phosphate aminotransferase subfamily. As to quaternary structure, homodimer. Pyridoxal 5'-phosphate serves as cofactor.

The enzyme catalyses L-histidinol phosphate + 2-oxoglutarate = 3-(imidazol-4-yl)-2-oxopropyl phosphate + L-glutamate. The protein operates within amino-acid biosynthesis; L-histidine biosynthesis; L-histidine from 5-phospho-alpha-D-ribose 1-diphosphate: step 7/9. In Bacillus anthracis, this protein is Histidinol-phosphate aminotransferase 1 (hisC1).